The chain runs to 625 residues: Chromatin structure-remodeling complex subunit RSC4 (625 aa).

The tract at residues 1-35 is disordered; sequence MVVKKRKLATEAGGSDERPKYLPGKHPKNQEKTPH. 2 consecutive Bromo domains span residues 53-158 and 181-292; these read WHIP…VLKA and KLVD…IQKE. Residues S199 and S545 each carry the phosphoserine modification. Over residues 536-552 the composition is skewed to polar residues; the sequence is RTSNVNSNLSQPQQQEN. The tract at residues 536–555 is disordered; the sequence is RTSNVNSNLSQPQQQENDVI.

In terms of assembly, component of the two forms of the RSC complex composed of at least either RSC1 or RSC2, and ARP7, ARP9, LDB7, NPL6, RSC3, RSC30, RSC4, RSC58, RSC6, RSC8, RSC9, SFH1, STH1, HTL1 and probably RTT102. The complexes interact with histone and histone variant components of centromeric chromatin.

The protein localises to the nucleus. Its function is as follows. Component of the chromatin structure remodeling complex (RSC), which is involved in transcription regulation and nucleosome positioning. RSC is responsible for the transfer of a histone octamer from a nucleosome core particle to naked DNA. The reaction requires ATP and involves an activated RSC-nucleosome intermediate. Remodeling reaction also involves DNA translocation, DNA twist and conformational change. As a reconfigurer of centromeric and flanking nucleosomes, RSC complex is required both for proper kinetochore function in chromosome segregation and, via a PKC1-dependent signaling pathway, for organization of the cellular cytoskeleton. The chain is Chromatin structure-remodeling complex subunit RSC4 (RSC4) from Saccharomyces cerevisiae (strain ATCC 204508 / S288c) (Baker's yeast).